The chain runs to 222 residues: Interleukin-12 subunit alpha (222 aa).

The first 25 residues, 1-25, serve as a signal peptide directing secretion; that stretch reads MCPPRGLLLVAILVLLNHLDHLSLA. Disulfide bonds link C40–C113, C67–C199, and C88–C126. 3 N-linked (GlcNAc...) asparagine glycosylation sites follow: N42, N96, and N110.

It belongs to the IL-6 superfamily. As to quaternary structure, heterodimer with IL12B; disulfide-linked. This heterodimer is known as interleukin IL-12. Heterodimer with EBI3/IL27B; not disulfide-linked. This heterodimer is known as interleukin IL-35. Interacts with NBR1; this interaction promotes IL-12 secretion.

Its subcellular location is the secreted. Heterodimerizes with IL12B to form the IL-12 cytokine or with EBI3/IL27B to form the IL-35 cytokine. IL-12 is primarily produced by professional antigen-presenting cells (APCs) such as B-cells and dendritic cells (DCs) as well as macrophages and granulocytes and regulates T-cell and natural killer-cell responses, induces the production of interferon-gamma (IFN-gamma), favors the differentiation of T-helper 1 (Th1) cells and is an important link between innate resistance and adaptive immunity. Mechanistically, exerts its biological effects through a receptor composed of IL12R1 and IL12R2 subunits. Binding to the receptor results in the rapid tyrosine phosphorylation of a number of cellular substrates including the JAK family kinases TYK2 and JAK2. In turn, recruited STAT4 gets phosphorylated and translocates to the nucleus where it regulates cytokine/growth factor responsive genes. As part of IL-35, plays essential roles in maintaining the immune homeostasis of the liver microenvironment and also functions as an immune-suppressive cytokine. Mediates biological events through unconventional receptors composed of IL12RB2 and gp130/IL6ST heterodimers or homodimers. Signaling requires the transcription factors STAT1 and STAT4, which form a unique heterodimer that binds to distinct DNA sites. This Equus caballus (Horse) protein is Interleukin-12 subunit alpha (IL12A).